Here is a 186-residue protein sequence, read N- to C-terminus: Temperature-induced lipocalin-1 (186 aa).

The HPR (Hydrophobic proline-rich) signature appears at 90 to 97 (PPFLPIIP). The tract at residues 154–174 (KLHKTPQSDTPPESNTAPEDS) is disordered. Positions 158 to 171 (TPQSDTPPESNTAP) are enriched in polar residues.

It belongs to the calycin superfamily. Lipocalin family. Expressed ubiquitously at similar levels, except in dry seeds (at protein level). Present in seeds.

The protein localises to the cell membrane. It is found in the cytoplasm. Its subcellular location is the plastid. It localises to the chloroplast membrane. Its function is as follows. Involved in basal (BT) and acquired thermotolerance (AT), probably by preventing plasma membrane lipids peroxidation induced by severe heat-shock (HS). Lipocalin that confers protection against oxidative stress caused by heat, freezing, paraquat and light. Confers resistance to high salt (NaCl) levels, probably by protecting chloroplasts from ion toxicity via ion homeostasis maintenance. Required for seed longevity by ensuring polyunsaturated lipids integrity. In Arabidopsis thaliana (Mouse-ear cress), this protein is Temperature-induced lipocalin-1.